The primary structure comprises 260 residues: Thiazole synthase (260 aa).

Residue Lys102 is the Schiff-base intermediate with DXP of the active site. 1-deoxy-D-xylulose 5-phosphate contacts are provided by residues Gly163, 189–190 (AG), and 211–212 (NT).

This sequence belongs to the ThiG family. Homotetramer. Forms heterodimers with either ThiH or ThiS.

It localises to the cytoplasm. It carries out the reaction [ThiS sulfur-carrier protein]-C-terminal-Gly-aminoethanethioate + 2-iminoacetate + 1-deoxy-D-xylulose 5-phosphate = [ThiS sulfur-carrier protein]-C-terminal Gly-Gly + 2-[(2R,5Z)-2-carboxy-4-methylthiazol-5(2H)-ylidene]ethyl phosphate + 2 H2O + H(+). It participates in cofactor biosynthesis; thiamine diphosphate biosynthesis. In terms of biological role, catalyzes the rearrangement of 1-deoxy-D-xylulose 5-phosphate (DXP) to produce the thiazole phosphate moiety of thiamine. Sulfur is provided by the thiocarboxylate moiety of the carrier protein ThiS. In vitro, sulfur can be provided by H(2)S. The polypeptide is Thiazole synthase (Geotalea uraniireducens (strain Rf4) (Geobacter uraniireducens)).